The primary structure comprises 416 residues: Keratin, type I cuticular Ha1 (416 aa).

Residues 1 to 56 (MPYNFCLPSLSCRTSCSSRPCVPPSCHSCTLPGACNIPANVSNCNWFCEGSFNGSE) are head. Residues 56–367 (EKETMQFLND…SLLESEDCNL (312 aa)) form the IF rod domain. The tract at residues 57–91 (KETMQFLNDRLASYLEKVRQLERDNAELENLIRER) is coil 1A. A linker 1 region spans residues 92–102 (SQQQEPLLCPS). The interval 103–203 (YQSYFKTIEE…HEQEVNTLRC (101 aa)) is coil 1B. The interval 204 to 219 (QLGDRLNVEVDAAPTV) is linker 12. The segment at 220–363 (DLNRVLNETR…NTYRSLLESE (144 aa)) is coil 2. The tract at residues 364–416 (DCNLPSNPCATTNACSKPIGPCLSNPCTPCVPPAPCTPCAPRPRCGPCNSFVR) is tail.

It belongs to the intermediate filament family.

This chain is Keratin, type I cuticular Ha1 (KRT31), found in Pan troglodytes (Chimpanzee).